A 199-amino-acid chain; its full sequence is Putative pseudouridine methyltransferase (199 aa).

L132 and C186 together coordinate S-adenosyl-L-methionine.

Belongs to the methyltransferase superfamily. TrmY family.

The protein localises to the cytoplasm. This Vibrio campbellii (strain ATCC BAA-1116) protein is Putative pseudouridine methyltransferase.